Here is a 304-residue protein sequence, read N- to C-terminus: Probable 5-dehydro-4-deoxyglucarate dehydratase (304 aa).

The protein belongs to the DapA family.

It catalyses the reaction 5-dehydro-4-deoxy-D-glucarate + H(+) = 2,5-dioxopentanoate + CO2 + H2O. It participates in carbohydrate acid metabolism; D-glucarate degradation; 2,5-dioxopentanoate from D-glucarate: step 2/2. The polypeptide is Probable 5-dehydro-4-deoxyglucarate dehydratase (Rhodococcus opacus (strain B4)).